A 1081-amino-acid chain; its full sequence is Pre-mRNA-splicing factor SYF1 (1081 aa).

The tract at residues 1 to 27 (MPPKMRSSQENVAVSSDATIQASSASS) is disordered. HAT repeat units follow at residues 54–86 (TLIP…HIIN), 117–149 (TALR…NRSR), 204–236 (QEWK…MFIH), and 243–277 (LSFT…WAER). The disordered stretch occupies residues 308-337 (QREDQDEPEGEEEEAEDDAQSDRSRKQSGS). A compositionally biased stretch (acidic residues) spans 311–326 (DQDEPEGEEEEAEDDA). HAT repeat units lie at residues 444–477 (TRLN…YWIK) and 479–514 (GEFD…TSEN). Positions 526 to 540 (EGGDEEADAEDQEET) are enriched in acidic residues. The interval 526 to 546 (EGGDEEADAEDQEETREDKEA) is disordered. 8 HAT repeats span residues 656 to 692 (GDLE…MELR), 711 to 745 (RNTK…LEES), 747 to 779 (GDVE…FLED), 781 to 815 (KYFE…KFVK), 820 to 854 (AKLE…LEEE), 856 to 887 (GLVK…YIAK), 892 to 926 (FGLA…LERK), and 928 to 962 (GEID…FEIE). Composition is skewed to low complexity over residues 1001 to 1011 (NQAQRGAQGSS) and 1047 to 1059 (STAA…ADTT). Disordered regions lie at residues 1001 to 1022 (NQAQ…DVDA) and 1047 to 1081 (STAA…QDLL). A compositionally biased stretch (acidic residues) spans 1070-1081 (VGGDDQDDQDLL).

This sequence belongs to the crooked-neck family. Associated with the spliceosome.

The protein localises to the nucleus. In terms of biological role, involved in pre-mRNA splicing and cell cycle progression. This is Pre-mRNA-splicing factor SYF1 (SYF1) from Mycosarcoma maydis (Corn smut fungus).